Here is a 399-residue protein sequence, read N- to C-terminus: Phosphoglycerate kinase (399 aa).

Residues Asp-21–Asn-23, Arg-36, His-59–Arg-62, Arg-120, and Arg-158 each bind substrate. ATP contacts are provided by residues Lys-209, Gly-297, Glu-328, and Gly-355–Ser-358.

It belongs to the phosphoglycerate kinase family. Monomer.

The protein resides in the cytoplasm. The catalysed reaction is (2R)-3-phosphoglycerate + ATP = (2R)-3-phospho-glyceroyl phosphate + ADP. It participates in carbohydrate degradation; glycolysis; pyruvate from D-glyceraldehyde 3-phosphate: step 2/5. This Streptococcus thermophilus (strain ATCC BAA-250 / LMG 18311) protein is Phosphoglycerate kinase.